A 443-amino-acid chain; its full sequence is Threonine/serine transporter TdcC (443 aa).

11 consecutive transmembrane segments (helical) span residues 22–42 (TTWTLGLFGTAIGAGVLFFPI), 44–64 (AGFGGLIPILLMLVLAYPIAF), 97–117 (GVVITFLYFFAICPLLWIYGV), 140–160 (FVALFLLLLMAFVIWFGKDLM), 163–183 (VMSFLVFPFIASLILISLSLI), 207–227 (ILVTVWLGISIMVFSFNFSPI), 259–279 (ASLLMVAVVMFFAFSCLFTLS), 319–339 (ASIIALVAIFKSFFGHYLGTL), 366–386 (ISMIFIMGSTWVVAYANPNIL), 389–409 (IEAMGAPIIASLLCLLPMFAI), and 423–443 (ENLFVTAVGLLTILNIVYKLF).

This sequence belongs to the amino acid/polyamine transporter 2 family. SdaC/TdcC subfamily.

It is found in the cell inner membrane. It carries out the reaction L-threonine(in) + H(+)(in) = L-threonine(out) + H(+)(out). It catalyses the reaction L-serine(in) + H(+)(in) = L-serine(out) + H(+)(out). Functionally, involved in the import of threonine and serine into the cell, with the concomitant import of a proton (symport system). This Enterobacter sp. (strain 638) protein is Threonine/serine transporter TdcC.